We begin with the raw amino-acid sequence, 67 residues long: VRDGYIMIKDTNCKFSCNIFKKWEYCSPLCQSKGAETGYCYNFGCWCLDLPDDVPVYGDRGVICRTR.

The 64-residue stretch at 2–65 (RDGYIMIKDT…VYGDRGVICR (64 aa)) folds into the LCN-type CS-alpha/beta domain. Disulfide bonds link C13–C64, C17–C40, C26–C45, and C30–C47. R67 is a propeptide (removed by a carboxypeptidase).

Belongs to the long (4 C-C) scorpion toxin superfamily. Sodium channel inhibitor family. Alpha subfamily. Expressed by the venom gland.

The protein resides in the secreted. Its function is as follows. Alpha toxins bind voltage-independently at site-3 of sodium channels (Nav) and inhibit the inactivation of the activated channels, thereby blocking neuronal transmission. The polypeptide is Putative sodium channel alpha-toxin Acra5 (Androctonus crassicauda (Arabian fat-tailed scorpion)).